A 516-amino-acid chain; its full sequence is 3-ketoacyl-CoA synthase 4 (516 aa).

2 helical membrane passes run 48-68 (LISN…SVEA) and 87-107 (LVSI…YVMT). Residues 104-393 (YVMTRPRPVY…FFMTLVVKKL (290 aa)) enclose the FAE domain. Residues Cys248, His327, His411, His415, His444, and Asn448 contribute to the active site.

This sequence belongs to the thiolase-like superfamily. Chalcone/stilbene synthases family. In terms of tissue distribution, expressed at low levels in siliques, flowers, leaves and stems.

It is found in the membrane. It catalyses the reaction a very-long-chain acyl-CoA + malonyl-CoA + H(+) = a very-long-chain 3-oxoacyl-CoA + CO2 + CoA. It functions in the pathway lipid metabolism; fatty acid biosynthesis. In Arabidopsis thaliana (Mouse-ear cress), this protein is 3-ketoacyl-CoA synthase 4.